A 141-amino-acid polypeptide reads, in one-letter code: Large ribosomal subunit protein uL11 (141 aa).

It belongs to the universal ribosomal protein uL11 family. Part of the ribosomal stalk of the 50S ribosomal subunit. Interacts with L10 and the large rRNA to form the base of the stalk. L10 forms an elongated spine to which L12 dimers bind in a sequential fashion forming a multimeric L10(L12)X complex. In terms of processing, one or more lysine residues are methylated.

Forms part of the ribosomal stalk which helps the ribosome interact with GTP-bound translation factors. In Tropheryma whipplei (strain TW08/27) (Whipple's bacillus), this protein is Large ribosomal subunit protein uL11.